A 243-amino-acid chain; its full sequence is 7-cyano-7-deazaguanine synthase (243 aa).

18-28 serves as a coordination point for ATP; it reads FSGGQDSATCL. Zn(2+)-binding residues include C206, C221, C224, and C227.

It belongs to the QueC family. Requires Zn(2+) as cofactor.

It carries out the reaction 7-carboxy-7-deazaguanine + NH4(+) + ATP = 7-cyano-7-deazaguanine + ADP + phosphate + H2O + H(+). Its pathway is purine metabolism; 7-cyano-7-deazaguanine biosynthesis. Functionally, catalyzes the ATP-dependent conversion of 7-carboxy-7-deazaguanine (CDG) to 7-cyano-7-deazaguanine (preQ(0)). The chain is 7-cyano-7-deazaguanine synthase from Maricaulis maris (strain MCS10) (Caulobacter maris).